The following is a 264-amino-acid chain: Small ribosomal subunit protein uS2 (264 aa).

Belongs to the universal ribosomal protein uS2 family.

The polypeptide is Small ribosomal subunit protein uS2 (Synechococcus sp. (strain JA-2-3B'a(2-13)) (Cyanobacteria bacterium Yellowstone B-Prime)).